The following is a 3503-amino-acid chain: Protein dachsous (3503 aa).

The first 20 residues, 1 to 20 (MLRSSLLILLAIVLLGSSQA), serve as a signal peptide directing secretion. Over 21–3045 (ASHDQERERK…SSSGSIGDWA (3025 aa)) the chain is Extracellular. Cadherin domains follow at residues 22–121 (SHDQ…APTF), 122–233 (PQTS…QPIF), 234–340 (NQSR…QPTI), 345–451 (LSDD…PPEF), 452–558 (EQDL…EPIF), 559–662 (DQSF…RPVF), 663–774 (YPRE…PPIF), 775–878 (EKAR…APEF), 879–983 (EASM…PPVF), 984–1100 (EKDE…DPKF), 1101–1203 (QKSK…APEI), 1205–1312 (DPQE…RPTF), 1313–1432 (TSSS…APEW), and 1433–1549 (PQDP…APHF). N-linked (GlcNAc...) asparagine glycans are attached at residues N220 and N234. S236 is modified (phosphoserine). N-linked (GlcNAc...) asparagine glycosylation is found at N245, N381, and N416. N-linked (GlcNAc...) asparagine glycosylation is found at N564, N594, and N743. 6 N-linked (GlcNAc...) asparagine glycosylation sites follow: N966, N991, N1006, N1029, N1143, and N1236. N-linked (GlcNAc...) asparagine glycans are attached at residues N1453, N1479, N1524, and N1553. Cadherin domains are found at residues 1556–1666 (GGKT…PPRF), 1667–1794 (LQAV…SPEF), 1796–1899 (PGSC…APRF), 1900–2004 (KLSK…RPIF), 2005–2111 (ERYP…TPVL), 2114–2269 (QNET…SPKF), 2270–2375 (SQKQ…QPTF), 2375–2479 (FPPN…APVF), 2489–2595 (AILP…RSQF), 2596–2699 (LQNQ…FPIF), 2701–2809 (RSAK…EPKF), 2810–2916 (PLTE…TPQF), and 2919–3028 (RTYR…HPGT). N1700, N1884, and N1940 each carry an N-linked (GlcNAc...) asparagine glycan. N-linked (GlcNAc...) asparagine glycosylation is present at N2115. The tract at residues 2193 to 2225 (GRALHYEEEIDESSEEDPNNSTRSQRALTSSSF) is disordered. Positions 2200 to 2210 (EEIDESSEEDP) are enriched in acidic residues. N-linked (GlcNAc...) asparagine glycans are attached at residues N2211 and N2212. Residues 2211–2225 (NNSTRSQRALTSSSF) show a composition bias toward polar residues. Residues N2421, N2511, N2520, N2547, N2588, and N2678 are each glycosylated (N-linked (GlcNAc...) asparagine). 2 N-linked (GlcNAc...) asparagine glycosylation sites follow: N2845 and N2967. A helical transmembrane segment spans residues 3046–3066 (IGLLVAFLLVLCAAAGIFLFI). Topologically, residues 3067–3503 (HMRSRKPRNA…SQRGNVGTRM (437 aa)) are cytoplasmic. Disordered stretches follow at residues 3114 to 3195 (AGAA…GRIS), 3360 to 3404 (LSEH…IPPP), and 3431 to 3503 (LPRS…GTRM). Composition is skewed to low complexity over residues 3133-3159 (GAHA…SGRG) and 3363-3372 (HSGSGASSSA). A compositionally biased stretch (pro residues) spans 3391-3404 (KPPPSAPPTHIPPP). A compositionally biased stretch (low complexity) spans 3440–3463 (ASGSFSTSSAMSPSFSPSLSPLAT). Phosphoserine is present on residues S3465 and S3469. The segment covering 3492-3503 (QPSQRGNVGTRM) has biased composition (polar residues).

Interacts (via cytoplasmic region) with Myo31DF. Phosphorylated by fj on Ser/Thr of cadherin domains. Expressed in embryonic ectoderm. In larvae, expression is restricted to imaginal disks and brain.

Its subcellular location is the cell membrane. The protein resides in the cell junction. Functionally, required for normal morphogenesis of adult structures derived from imaginal disks. Plays a role in planar cell polarity and in determining body left-right asymmetry. Expression in segment H1 of the imaginal ring and interaction with Myo31DF are required to induce changes of cell shape and orientation in segment H2, which then gives rise to normal, dextral looping of the adult hindgut. In Drosophila melanogaster (Fruit fly), this protein is Protein dachsous (ds).